A 253-amino-acid chain; its full sequence is Probable transcriptional regulatory protein RC0681 (253 aa).

Positions 1–21 (MAGHSKFKNIQHRKGAQDKKR) are disordered.

The protein belongs to the TACO1 family.

Its subcellular location is the cytoplasm. This Rickettsia conorii (strain ATCC VR-613 / Malish 7) protein is Probable transcriptional regulatory protein RC0681.